We begin with the raw amino-acid sequence, 242 residues long: Probable transcriptional regulatory protein lp_2253 (242 aa).

The segment at 1–21 is disordered; it reads MSGHSKWHNIQGRKNAQDAKR.

The protein belongs to the TACO1 family.

It localises to the cytoplasm. This is Probable transcriptional regulatory protein lp_2253 from Lactiplantibacillus plantarum (strain ATCC BAA-793 / NCIMB 8826 / WCFS1) (Lactobacillus plantarum).